The primary structure comprises 369 residues: 3-dehydroquinate synthase (369 aa).

NAD(+)-binding positions include 71 to 76 (DGECHK), 105 to 109 (GVIND), 129 to 130 (TT), Lys142, Lys151, and 169 to 172 (TLST). Residues Glu184, His247, and His264 each coordinate Zn(2+).

This sequence belongs to the sugar phosphate cyclases superfamily. Dehydroquinate synthase family. The cofactor is Co(2+). Zn(2+) is required as a cofactor. It depends on NAD(+) as a cofactor.

It localises to the cytoplasm. It carries out the reaction 7-phospho-2-dehydro-3-deoxy-D-arabino-heptonate = 3-dehydroquinate + phosphate. The protein operates within metabolic intermediate biosynthesis; chorismate biosynthesis; chorismate from D-erythrose 4-phosphate and phosphoenolpyruvate: step 2/7. Catalyzes the conversion of 3-deoxy-D-arabino-heptulosonate 7-phosphate (DAHP) to dehydroquinate (DHQ). The chain is 3-dehydroquinate synthase from Dichelobacter nodosus (strain VCS1703A).